A 272-amino-acid polypeptide reads, in one-letter code: Tryptophan synthase alpha chain (272 aa).

Residues E49 and D60 each act as proton acceptor in the active site.

Belongs to the TrpA family. Tetramer of two alpha and two beta chains.

It catalyses the reaction (1S,2R)-1-C-(indol-3-yl)glycerol 3-phosphate + L-serine = D-glyceraldehyde 3-phosphate + L-tryptophan + H2O. It functions in the pathway amino-acid biosynthesis; L-tryptophan biosynthesis; L-tryptophan from chorismate: step 5/5. The alpha subunit is responsible for the aldol cleavage of indoleglycerol phosphate to indole and glyceraldehyde 3-phosphate. This Methylibium petroleiphilum (strain ATCC BAA-1232 / LMG 22953 / PM1) protein is Tryptophan synthase alpha chain.